A 264-amino-acid chain; its full sequence is NAD kinase (264 aa).

Aspartate 45 (proton acceptor) is an active-site residue. NAD(+)-binding positions include 45–46 (DG), 121–122 (NE), arginine 147, aspartate 149, alanine 184, and glutamine 221.

It belongs to the NAD kinase family. A divalent metal cation serves as cofactor.

The protein resides in the cytoplasm. It carries out the reaction NAD(+) + ATP = ADP + NADP(+) + H(+). In terms of biological role, involved in the regulation of the intracellular balance of NAD and NADP, and is a key enzyme in the biosynthesis of NADP. Catalyzes specifically the phosphorylation on 2'-hydroxyl of the adenosine moiety of NAD to yield NADP. The chain is NAD kinase from Leuconostoc mesenteroides subsp. mesenteroides (strain ATCC 8293 / DSM 20343 / BCRC 11652 / CCM 1803 / JCM 6124 / NCDO 523 / NBRC 100496 / NCIMB 8023 / NCTC 12954 / NRRL B-1118 / 37Y).